The following is a 78-amino-acid chain: Large ribosomal subunit protein bL28 (78 aa).

Residues 1–28 (MSAICQVTGRQPGYGKSVSHSHRRTSRR) are disordered.

Belongs to the bacterial ribosomal protein bL28 family.

The protein is Large ribosomal subunit protein bL28 of Corynebacterium diphtheriae (strain ATCC 700971 / NCTC 13129 / Biotype gravis).